We begin with the raw amino-acid sequence, 453 residues long: Putative amino acid/polyamine transporter MPH_07630_2 (453 aa).

Helical transmembrane passes span 2–21 (IGFS…VLVV), 30–50 (VMIW…YSMA), and 81–101 (VCGW…NFIA). Residue asparagine 110 is glycosylated (N-linked (GlcNAc...) asparagine). Transmembrane regions (helical) follow at residues 121-141 (WHAV…SIFL) and 151-171 (AILI…LATN). Residue asparagine 186 is glycosylated (N-linked (GlcNAc...) asparagine). 2 helical membrane-spanning segments follow: residues 193–213 (AYAA…YDAP) and 231–251 (IVMS…SLCF). N-linked (GlcNAc...) asparagine glycosylation is present at asparagine 274. Helical transmembrane passes span 277-297 (GSVA…LVCA), 330-350 (LGVP…FNSI), 358-378 (FNTV…IPLL), and 403-423 (GLLA…TFNF). The N-linked (GlcNAc...) asparagine glycan is linked to asparagine 435.

It belongs to the amino acid-polyamine-organocation (APC) superfamily.

The protein resides in the membrane. The protein is Putative amino acid/polyamine transporter MPH_07630_2 of Macrophomina phaseolina (strain MS6) (Charcoal rot fungus).